Consider the following 117-residue polypeptide: G antigen 12I (117 aa).

The tract at residues 1–117 (MSWRGRSTYY…PEEGEKQSQC (117 aa)) is disordered. Acidic residues-rich tracts occupy residues 32–45 (FSDE…EEGE) and 87–96 (ECEDGPDGQE). A compositionally biased stretch (basic and acidic residues) spans 103-117 (EEVKTPEEGEKQSQC).

It belongs to the GAGE family. Forms tetramers.

The protein is G antigen 12I (GAGE12I) of Homo sapiens (Human).